Consider the following 548-residue polypeptide: Chaperonin GroEL (548 aa).

Residues 30–33 (TLGP), Lys-51, 87–91 (DGTTT), Gly-415, and 479–481 (NAV) contribute to the ATP site.

Belongs to the chaperonin (HSP60) family. In terms of assembly, forms a cylinder of 14 subunits composed of two heptameric rings stacked back-to-back. Interacts with the co-chaperonin GroES.

The protein resides in the cytoplasm. The enzyme catalyses ATP + H2O + a folded polypeptide = ADP + phosphate + an unfolded polypeptide.. In terms of biological role, together with its co-chaperonin GroES, plays an essential role in assisting protein folding. The GroEL-GroES system forms a nano-cage that allows encapsulation of the non-native substrate proteins and provides a physical environment optimized to promote and accelerate protein folding. The protein is Chaperonin GroEL of Stenotrophomonas maltophilia (Pseudomonas maltophilia).